The chain runs to 442 residues: Type 3 secretion system ATPase (442 aa).

Position 173 to 178 (173 to 178 (GVGKST)) interacts with ATP.

Belongs to the ATPase alpha/beta chains family. T3SS ATPase subfamily. In terms of assembly, the core secretion machinery of the T3SS is composed of approximately 20 different proteins, including cytoplasmic components, a base, an export apparatus and a needle. This subunit is part of the cytosolic complex. Forms homohexamers.

It localises to the cytoplasm. It carries out the reaction ATP + H2O + cellular proteinSide 1 = ADP + phosphate + cellular proteinSide 2.. Its function is as follows. ATPase component of the type III secretion system (T3SS), also called injectisome, which is used to inject bacterial effector proteins into eukaryotic host cells. Acts as a molecular motor to provide the energy that is required for the export of proteins. Required for type III secretion apparatus (T3SA) formation, proper protein secretion, host cell invasion and virulence. May play a critical role in T3SS substrate recognition, disassembly of the effector/chaperone complex and unfolding of the effector in an ATP-dependent manner prior to secretion. In Xanthomonas euvesicatoria, this protein is Type 3 secretion system ATPase.